The sequence spans 491 residues: Probable cytosol aminopeptidase (491 aa).

Residues K263 and D268 each coordinate Mn(2+). The active site involves K275. Residues D286, D345, and E347 each coordinate Mn(2+). R349 is a catalytic residue.

This sequence belongs to the peptidase M17 family. Mn(2+) serves as cofactor.

Its subcellular location is the cytoplasm. The catalysed reaction is Release of an N-terminal amino acid, Xaa-|-Yaa-, in which Xaa is preferably Leu, but may be other amino acids including Pro although not Arg or Lys, and Yaa may be Pro. Amino acid amides and methyl esters are also readily hydrolyzed, but rates on arylamides are exceedingly low.. The enzyme catalyses Release of an N-terminal amino acid, preferentially leucine, but not glutamic or aspartic acids.. In terms of biological role, presumably involved in the processing and regular turnover of intracellular proteins. Catalyzes the removal of unsubstituted N-terminal amino acids from various peptides. The chain is Probable cytosol aminopeptidase from Haemophilus influenzae (strain PittEE).